The primary structure comprises 430 residues: MDLLSDIEKQLQKATAQAFLIALSGGLDSTVLLSLFAKLCQKQPHLPPLSIRAIHIHHGLSPNADSWAKHCQDLCDQFQIPLIIERVQVDKTNGIEAGAREARYQAIKKYLQTQEMLVTAHHLNDQTETFFLALKRGSGLKGLGAMQQQSVLFGMPILRPLLGFTRTQLENYAQKEKLNWITDESNEDNRYDRNFLRNEILPELRERWAHFDLAVQRSAQHCFEQQQLINDLLSEIFTEHCQIKNQFKLCQFRQYSLAKQTALLRMWLAENQLEMPSKRQLTQLINDVIFAKEEANPQFQLVNKVIRRYQDSLYLTKPFSDLTKCTLKLEQNTLNLPDDLGNLTVQENEHNLIFYWQDYSVTLEKTNLPISIRFGYSGKVKHYPKRPREDIKKIWQELGVPPWERNRIPLIFYGNELKSAVGFFRVLKSS.

Position 24 to 29 (24 to 29 (SGGLDS)) interacts with ATP.

The protein belongs to the tRNA(Ile)-lysidine synthase family.

It is found in the cytoplasm. It carries out the reaction cytidine(34) in tRNA(Ile2) + L-lysine + ATP = lysidine(34) in tRNA(Ile2) + AMP + diphosphate + H(+). Functionally, ligates lysine onto the cytidine present at position 34 of the AUA codon-specific tRNA(Ile) that contains the anticodon CAU, in an ATP-dependent manner. Cytidine is converted to lysidine, thus changing the amino acid specificity of the tRNA from methionine to isoleucine. This chain is tRNA(Ile)-lysidine synthase, found in Haemophilus influenzae (strain ATCC 51907 / DSM 11121 / KW20 / Rd).